We begin with the raw amino-acid sequence, 360 residues long: Probable nuclear hormone receptor HR38 (360 aa).

The tract at residues 1 to 21 is disordered; sequence GSSSPGVAPADNTGPRAAPSS. A DNA-binding region (nuclear receptor) is located at residues 23-98; that stretch reads SQLCAVCGDT…VGMVKEVVRT (76 aa). 2 consecutive NR C4-type zinc fingers follow at residues 26–46 and 62–86; these read CAVC…CEGC and CLAE…FQKC. An NR LBD domain is found at 122–357; that stretch reads PPISLITALV…PLIENMFRAS (236 aa).

It belongs to the nuclear hormone receptor family. NR4 subfamily. Forms a heterodimer with USP.

Its subcellular location is the nucleus. The chain is Probable nuclear hormone receptor HR38 (HR38) from Bombyx mori (Silk moth).